Consider the following 279-residue polypeptide: Vitamin B12-binding protein (279 aa).

Positions 1 to 20 (MTFRFLCWLTGLLLCTAAYA) are cleaved as a signal peptide. Residues 24–276 (RVISLAPHAT…QLAELKLAPS (253 aa)) form the Fe/B12 periplasmic-binding domain. An intrachain disulfide couples Cys189 to Cys265.

The protein belongs to the BtuF family. As to quaternary structure, the complex is composed of two ATP-binding proteins (BtuD), two transmembrane proteins (BtuC) and a solute-binding protein (BtuF).

Its subcellular location is the periplasm. Functionally, part of the ABC transporter complex BtuCDF involved in vitamin B12 import. Binds vitamin B12 and delivers it to the periplasmic surface of BtuC. In Pectobacterium atrosepticum (strain SCRI 1043 / ATCC BAA-672) (Erwinia carotovora subsp. atroseptica), this protein is Vitamin B12-binding protein.